The sequence spans 439 residues: Elongation factor 1-alpha 2 (439 aa).

The region spanning 6-229 is the tr-type G domain; it reads KDHLNLVVIG…DEFKVPKRPI (224 aa). The segment at 15-22 is G1; it reads GHVDSGKS. A GTP-binding site is contributed by 15-22; that stretch reads GHVDSGKS. Positions 71–75 are G2; the sequence is GITIN. The interval 92–95 is G3; it reads DAPG. GTP contacts are provided by residues 92–96 and 154–157; these read DAPGH and NKMD. A G4 region spans residues 154 to 157; it reads NKMD. Positions 193–195 are G5; that stretch reads SGF.

This sequence belongs to the TRAFAC class translation factor GTPase superfamily. Classic translation factor GTPase family. EF-Tu/EF-1A subfamily.

It localises to the cytoplasm. Its function is as follows. This protein promotes the GTP-dependent binding of aminoacyl-tRNA to the A-site of ribosomes during protein biosynthesis. The protein is Elongation factor 1-alpha 2 (EFA2) of Euplotes crassus.